Reading from the N-terminus, the 332-residue chain is Glycerol-3-phosphate dehydrogenase [NAD(P)+] (332 aa).

The NADPH site is built by tryptophan 11, arginine 30, and lysine 108. The sn-glycerol 3-phosphate site is built by lysine 108, glycine 137, and serine 139. NADPH is bound at residue alanine 141. Sn-glycerol 3-phosphate contacts are provided by lysine 192, aspartate 245, serine 255, arginine 256, and asparagine 257. Residue lysine 192 is the Proton acceptor of the active site. NADPH is bound at residue arginine 256. NADPH-binding residues include valine 280 and glutamate 282.

Belongs to the NAD-dependent glycerol-3-phosphate dehydrogenase family.

It is found in the cytoplasm. It carries out the reaction sn-glycerol 3-phosphate + NAD(+) = dihydroxyacetone phosphate + NADH + H(+). The enzyme catalyses sn-glycerol 3-phosphate + NADP(+) = dihydroxyacetone phosphate + NADPH + H(+). The protein operates within membrane lipid metabolism; glycerophospholipid metabolism. Its function is as follows. Catalyzes the reduction of the glycolytic intermediate dihydroxyacetone phosphate (DHAP) to sn-glycerol 3-phosphate (G3P), the key precursor for phospholipid synthesis. The chain is Glycerol-3-phosphate dehydrogenase [NAD(P)+] from Paraburkholderia phymatum (strain DSM 17167 / CIP 108236 / LMG 21445 / STM815) (Burkholderia phymatum).